The following is a 109-amino-acid chain: uncharacterized protein (109 aa).

Residues 75 to 95 traverse the membrane as a helical segment; sequence MALFHTVFILWPHFCGILWTV.

Its subcellular location is the membrane. This is an uncharacterized protein from Saccharomyces cerevisiae (strain ATCC 204508 / S288c) (Baker's yeast).